A 504-amino-acid chain; its full sequence is Glucose-6-phosphate isomerase (504 aa).

The Proton donor role is filled by glutamate 333. Residues histidine 364 and lysine 473 contribute to the active site.

It belongs to the GPI family.

The protein resides in the cytoplasm. The catalysed reaction is alpha-D-glucose 6-phosphate = beta-D-fructose 6-phosphate. It functions in the pathway carbohydrate biosynthesis; gluconeogenesis. It participates in carbohydrate degradation; glycolysis; D-glyceraldehyde 3-phosphate and glycerone phosphate from D-glucose: step 2/4. Its function is as follows. Catalyzes the reversible isomerization of glucose-6-phosphate to fructose-6-phosphate. This chain is Glucose-6-phosphate isomerase, found in Xanthomonas oryzae pv. oryzae (strain PXO99A).